A 469-amino-acid polypeptide reads, in one-letter code: 3-isopropylmalate dehydratase large subunit (469 aa).

Residues C347, C410, and C413 each contribute to the [4Fe-4S] cluster site.

The protein belongs to the aconitase/IPM isomerase family. LeuC type 1 subfamily. Heterodimer of LeuC and LeuD. Requires [4Fe-4S] cluster as cofactor.

It carries out the reaction (2R,3S)-3-isopropylmalate = (2S)-2-isopropylmalate. It functions in the pathway amino-acid biosynthesis; L-leucine biosynthesis; L-leucine from 3-methyl-2-oxobutanoate: step 2/4. Its function is as follows. Catalyzes the isomerization between 2-isopropylmalate and 3-isopropylmalate, via the formation of 2-isopropylmaleate. The polypeptide is 3-isopropylmalate dehydratase large subunit (Burkholderia thailandensis (strain ATCC 700388 / DSM 13276 / CCUG 48851 / CIP 106301 / E264)).